We begin with the raw amino-acid sequence, 90 residues long: Cell division topological specificity factor (90 aa).

It belongs to the MinE family.

Functionally, prevents the cell division inhibition by proteins MinC and MinD at internal division sites while permitting inhibition at polar sites. This ensures cell division at the proper site by restricting the formation of a division septum at the midpoint of the long axis of the cell. This chain is Cell division topological specificity factor, found in Francisella tularensis subsp. tularensis (strain FSC 198).